The primary structure comprises 183 residues: Large ribosomal subunit protein uL5 (183 aa).

The protein belongs to the universal ribosomal protein uL5 family. In terms of assembly, part of the 50S ribosomal subunit; contacts the 5S rRNA and probably tRNA. Forms a bridge to the 30S subunit in the 70S ribosome.

Functionally, this is one of the proteins that bind and probably mediate the attachment of the 5S RNA into the large ribosomal subunit, where it forms part of the central protuberance. In the 70S ribosome it contacts protein S13 of the 30S subunit (bridge B1b), connecting the 2 subunits; this bridge is implicated in subunit movement. May contact the P site tRNA; the 5S rRNA and some of its associated proteins might help stabilize positioning of ribosome-bound tRNAs. This chain is Large ribosomal subunit protein uL5, found in Thermococcus kodakarensis (strain ATCC BAA-918 / JCM 12380 / KOD1) (Pyrococcus kodakaraensis (strain KOD1)).